Reading from the N-terminus, the 262-residue chain is Thrombin-like enzyme gyroxin B1.3 (262 aa).

The N-terminal stretch at 1–18 is a signal peptide; that stretch reads MVLIRVLANLLILQLSYA. Residues 19-262 constitute a propeptide that is removed on maturation; that stretch reads QKSSELVIGG…AGSETVNCPS (244 aa). Positions 25–253 constitute a Peptidase S1 domain; it reads VIGGDECNIN…HLDWIQNIIA (229 aa). Intrachain disulfides connect Cys31/Cys165, Cys52/Cys68, Cys102/Cys260, Cys144/Cys214, Cys176/Cys193, and Cys204/Cys229. Catalysis depends on His67, which acts as the Charge relay system. Residue Asn105 is glycosylated (N-linked (GlcNAc...) asparagine). Asp112 (charge relay system) is an active-site residue. Residue Ser208 is the Charge relay system of the active site.

This sequence belongs to the peptidase S1 family. Snake venom subfamily. Monomer. In terms of tissue distribution, expressed by the venom gland.

The protein resides in the secreted. Functionally, thrombin-like snake venom serine protease. Displays a specificity similar to trypsin. Releases only fibrinopeptide A in the conversion of fibrinogen to fibrin. Reversibly increases the permeability of the blood brain barrier (BBB) in mice. Induces the barrel rotation syndrome in mice, which is manifested by gyroxin-like, rapid rolling motions. This syndrome may be due to its effect on BBB permeability, and certainly also to other actions affecting endogenous substrates present in the endothelium, nervous tissues or blood. Also shows a moderate inhibitory activity on the human voltage-gated potassium channel Kv10.1/KCNH1/EAG1 (58% current inhibition at 5 uM). It blocks Kv10.1/KCNH1/EAG1 in a time and dose-dependent manner and with a mechanism independent of its enzymatic activity. It may have a preference in interacting with Kv10.1/KCNH1/EAG1 in its closed state, since the inhibitory effect of the toxin is decreased at more depolarized potentials. This Crotalus durissus terrificus (South American rattlesnake) protein is Thrombin-like enzyme gyroxin B1.3.